We begin with the raw amino-acid sequence, 161 residues long: Probable chemoreceptor glutamine deamidase CheD (161 aa).

Belongs to the CheD family.

It catalyses the reaction L-glutaminyl-[protein] + H2O = L-glutamyl-[protein] + NH4(+). In terms of biological role, probably deamidates glutamine residues to glutamate on methyl-accepting chemotaxis receptors (MCPs), playing an important role in chemotaxis. The polypeptide is Probable chemoreceptor glutamine deamidase CheD (Trichlorobacter lovleyi (strain ATCC BAA-1151 / DSM 17278 / SZ) (Geobacter lovleyi)).